Consider the following 511-residue polypeptide: Fas-activated serine/threonine kinase (511 aa).

An RAP domain is found at 439 to 497 (VVLMLRERWHFCRDGRVLLGSRALRERHLGLMGYQLLPLPFEELESQRGLPQLKSYLRQ).

Belongs to the FAST protein kinase family. In terms of assembly, interacts with TIA1; the interactions leads to TIA1 phosphorylation. Interacts with TIAR. Post-translationally, autophosphorylated on serine/threonine residues. Activated by dephosphorylation.

It is found in the mitochondrion matrix. The catalysed reaction is L-seryl-[Fas-activated protein] + ATP = O-phospho-L-seryl-[Fas-activated protein] + ADP + H(+). It carries out the reaction L-threonyl-[Fas-activated protein] + ATP = O-phospho-L-threonyl-[Fas-activated protein] + ADP + H(+). The enzyme catalyses L-seryl-[protein] + ATP = O-phospho-L-seryl-[protein] + ADP + H(+). It catalyses the reaction L-threonyl-[protein] + ATP = O-phospho-L-threonyl-[protein] + ADP + H(+). Its function is as follows. Phosphorylates the splicing regulator TIA1, thereby promoting the inclusion of FAS exon 6, which leads to an mRNA encoding a pro-apoptotic form of the receptor. Required for the biogenesis of some mitochondrial-encoded mRNAs, specifically stabilizes ND6 (NADH dehydrogenase complex subunit 6) mRNA, and regulates its levels. The sequence is that of Fas-activated serine/threonine kinase (Fastk) from Mus musculus (Mouse).